The chain runs to 102 residues: Malonate decarboxylase acyl carrier protein (102 aa).

At Ser27 the chain carries O-(phosphoribosyl dephospho-coenzyme A)serine.

This sequence belongs to the MdcC family. Covalently binds the prosthetic group of malonate decarboxylase.

Its subcellular location is the cytoplasm. Functionally, subunit of malonate decarboxylase, it is an acyl carrier protein to which acetyl and malonyl thioester residues are bound via a 2'-(5''-phosphoribosyl)-3'-dephospho-CoA prosthetic group and turn over during the catalytic mechanism. The protein is Malonate decarboxylase acyl carrier protein of Acinetobacter calcoaceticus.